The primary structure comprises 78 residues: Large ribosomal subunit protein bL28 (78 aa).

Belongs to the bacterial ribosomal protein bL28 family.

The chain is Large ribosomal subunit protein bL28 from Hydrogenovibrio crunogenus (strain DSM 25203 / XCL-2) (Thiomicrospira crunogena).